The chain runs to 773 residues: Photosystem I P700 chlorophyll a apoprotein A1 (773 aa).

Positions 1 to 27 (MTISPPERGEKAKGAAPTPYDQPVDRD) are disordered. 8 consecutive transmembrane segments (helical) span residues 80–103 (IFSAHFGHLAVVFIWMSAAFFHGA), 166–189 (LMALAIGGVIMAALMLHGGIYHYH), 205–229 (LQHHQIALIGLGSIAWAGHLIHIGA), 315–333 (ISHHHLAFGVFAIFGGHMW), 375–398 (WHGQLSINLAMVGSASIVVAHHMY), 414–440 (LGLFTHHMWIGGLFICGAAAHAGIAMI), 462–484 (AIISHLNWVCMWLGFHSFGLYIH), and 564–582 (LMIHHVHAFTIHVTLLILL). 2 residues coordinate [4Fe-4S] cluster: cysteine 606 and cysteine 615. Helical transmembrane passes span 622–643 (HVFLGLFWMYNSLSVVIFHFSW) and 687–709 (ISMYGLMFLGAHFVWAFSLMFLF). Divinylchlorophyll a' is bound at residue histidine 698. Residues methionine 706 and tyrosine 714 each coordinate divinyl chlorophyll a. A phylloquinone-binding site is contributed by tryptophan 715. A helical membrane pass occupies residues 747 to 767 (AVGVAHFLLGGIATTWAFFHA).

It belongs to the PsaA/PsaB family. As to quaternary structure, the PsaA/B heterodimer binds the P700 divinyl chlorophyll special pair and subsequent electron acceptors. PSI consists of a core antenna complex that captures photons, and an electron transfer chain that converts photonic excitation into a charge separation. The cyanobacterial PSI reaction center is composed of one copy each of PsaA,B,C,D,E,F,I,J,K,L,M and X, and forms trimeric complexes. PSI electron transfer chain: 5 divinyl chlorophyll a, 1 divinyl chlorophyll a', 2 phylloquinones and 3 4Fe-4S clusters. PSI core antenna: 90 divinyl chlorophyll a, 22 carotenoids, 3 phospholipids and 1 galactolipid. P700 is a divinyl chlorophyll a/divinyl chlorophyll a' dimer, A0 is one or more divinylchlorophyll a, A1 is one or both phylloquinones and FX is a shared 4Fe-4S iron-sulfur center. is required as a cofactor.

The protein localises to the cellular thylakoid membrane. It catalyses the reaction reduced [plastocyanin] + hnu + oxidized [2Fe-2S]-[ferredoxin] = oxidized [plastocyanin] + reduced [2Fe-2S]-[ferredoxin]. In terms of biological role, psaA and PsaB bind P700, the primary electron donor of photosystem I (PSI), as well as the electron acceptors A0, A1 and FX. PSI is a plastocyanin/cytochrome c6-ferredoxin oxidoreductase, converting photonic excitation into a charge separation, which transfers an electron from the donor P700 chlorophyll pair to the spectroscopically characterized acceptors A0, A1, FX, FA and FB in turn. Oxidized P700 is reduced on the lumenal side of the thylakoid membrane by plastocyanin or cytochrome c6. The protein is Photosystem I P700 chlorophyll a apoprotein A1 of Prochlorococcus marinus (strain SARG / CCMP1375 / SS120).